A 252-amino-acid polypeptide reads, in one-letter code: Chitooligosaccharide deacetylase (252 aa).

2 residues coordinate Mg(2+): His-61 and His-125.

This sequence belongs to the YdjC deacetylase family. ChbG subfamily. Homodimer. Requires Mg(2+) as cofactor.

The protein localises to the cytoplasm. It carries out the reaction N,N'-diacetylchitobiose + H2O = N-acetyl-beta-D-glucosaminyl-(1-&gt;4)-D-glucosamine + acetate. It catalyses the reaction diacetylchitobiose-6'-phosphate + H2O = N'-monoacetylchitobiose-6'-phosphate + acetate. It functions in the pathway glycan degradation; chitin degradation. In terms of biological role, involved in the degradation of chitin. ChbG is essential for growth on the acetylated chitooligosaccharides chitobiose and chitotriose but is dispensable for growth on cellobiose and chitosan dimer, the deacetylated form of chitobiose. Deacetylation of chitobiose-6-P and chitotriose-6-P is necessary for both the activation of the chb promoter by the regulatory protein ChbR and the hydrolysis of phosphorylated beta-glucosides by the phospho-beta-glucosidase ChbF. Catalyzes the removal of only one acetyl group from chitobiose-6-P to yield monoacetylchitobiose-6-P, the inducer of ChbR and the substrate of ChbF. This is Chitooligosaccharide deacetylase from Escherichia coli O6:H1 (strain CFT073 / ATCC 700928 / UPEC).